A 109-amino-acid chain; its full sequence is Nucleoid-associated protein HD_0326 (109 aa).

The protein belongs to the YbaB/EbfC family. Homodimer.

Its subcellular location is the cytoplasm. The protein localises to the nucleoid. Its function is as follows. Binds to DNA and alters its conformation. May be involved in regulation of gene expression, nucleoid organization and DNA protection. The protein is Nucleoid-associated protein HD_0326 of Haemophilus ducreyi (strain 35000HP / ATCC 700724).